Consider the following 630-residue polypeptide: tRNA uridine 5-carboxymethylaminomethyl modification enzyme MnmG (630 aa).

Residue 15–20 participates in FAD binding; it reads GAGHAG. 274-288 contributes to the NAD(+) binding site; sequence GPRYCPSIEDKIVRF.

The protein belongs to the MnmG family. As to quaternary structure, homodimer. Heterotetramer of two MnmE and two MnmG subunits. The cofactor is FAD.

The protein localises to the cytoplasm. In terms of biological role, NAD-binding protein involved in the addition of a carboxymethylaminomethyl (cmnm) group at the wobble position (U34) of certain tRNAs, forming tRNA-cmnm(5)s(2)U34. This Alkaliphilus oremlandii (strain OhILAs) (Clostridium oremlandii (strain OhILAs)) protein is tRNA uridine 5-carboxymethylaminomethyl modification enzyme MnmG.